Reading from the N-terminus, the 3938-residue chain is Protein bassoon (3938 aa).

The segment at 1 to 158 (MGNEASLEGG…PTSPYSVPQI (158 aa)) is disordered. Glycine 2 carries the N-myristoyl glycine lipid modification. Residues 9 to 29 (GGAGEGPLPPGGSGLGPGPGA) show a composition bias toward gly residues. The span at 31 to 61 (KPPSALAGGGQLPVAGAARAAGPPTPGLGLV) shows a compositional bias: low complexity. The 4 X 2 AA tandem repeats of P-G stretch occupies residues 62 to 70 (PGPGPGPGP). 2 stretches are compositionally biased toward polar residues: residues 86–98 (QRATSPTPKQASA) and 127–154 (QVDSRTQRSGRSPSVSPDRGSTPTSPYS). A Phosphoserine modification is found at serine 142. Arginine 145 carries the omega-N-methylarginine modification. C4-type zinc fingers lie at residues 167–190 (CPICKTSDLTSTSSQPNFNTCTQC) and 195–217 (CNQCGFNPNPHLTQVKEWLCLNC). Disordered stretches follow at residues 228–346 (TTAP…LTGK) and 361–456 (LMSV…KTMP). Polar residues predominate over residues 230 to 240 (APRSKSQQQLH). Phosphoserine occurs at positions 241 and 245. Over residues 361 to 376 (LMSVQPEADTQGQPSP) the composition is skewed to polar residues. Pro residues predominate over residues 394–406 (PRPPGSGPGPGPT). C4-type zinc fingers lie at residues 462–485 (CPLCQAELNVGSRGPANYNTCTAC) and 490–512 (CTLCGFNPTPHLVEKTEWLCLNC). Disordered regions lie at residues 523–921 (GEPA…LQGG), 934–1247 (GRLW…TPAG), 1294–1541 (MDPM…WQQS), and 1561–1611 (RMVH…RAPS). Positions 526-539 (APLPLPTPQEPPAG) are enriched in pro residues. The segment covering 548–589 (SPLKQKGPQGPGQPSGSLPPKASPQAAKASPQAAKASPQAKP) has biased composition (low complexity). Tandem repeats lie at residues 568–574 (KASPQAA), 575–581 (KASPQAA), and 582–588 (KASPQAK). The segment at 568–588 (KASPQAAKASPQAAKASPQAK) is 3 X 7 AA tandem repeats of K-A-S-P-Q-A-[AK]. Over residues 616 to 629 (VPKPPPETAVPPGT) the composition is skewed to pro residues. Over residues 668–677 (QDLSRSPQSL) the composition is skewed to polar residues. Positions 678–692 (SDTGYSSDGVSSSQS) are enriched in low complexity. Residues 693-702 (EITGVVQQEV) are compositionally biased toward polar residues. Composition is skewed to acidic residues over residues 769-784 (FDSDEELGDILEEDDS) and 847-858 (SAEEDNLEEDDT). An Omega-N-methylarginine modification is found at arginine 863. Serine 965 is modified (phosphoserine). Positions 979-996 (PASTPSYTSGTSPTSLSS) are enriched in low complexity. The stretch at 1032–1087 (IEDSSEEEELREEEELLREQEKMREVEQQRIRSTARKTRRDKEELRAQRRRERSKT) forms a coiled coil. Acidic residues predominate over residues 1034–1047 (DSSEEEELREEEEL). Residues serine 1035 and serine 1036 each carry the phosphoserine modification. Residues 1048–1061 (LREQEKMREVEQQR) are compositionally biased toward basic and acidic residues. Serine 1085 is modified (phosphoserine). Threonine 1087 carries the post-translational modification Phosphothreonine. Residues serine 1093 and serine 1099 each carry the phosphoserine modification. Residues 1102 to 1117 (EELRQAAEMEELHRSS) are compositionally biased toward basic and acidic residues. 2 stretches are compositionally biased toward low complexity: residues 1118 to 1128 (CSEYSPSPSLD) and 1158 to 1175 (SPTETPSGSSTTPSSGRP). Residues 1176 to 1203 (LKSAEEAYEDMMRKAELLQRQQGQAAGA) are a coiled coil. A compositionally biased stretch (basic and acidic residues) spans 1177 to 1192 (KSAEEAYEDMMRKAEL). Residues 1194–1204 (QRQQGQAAGAR) are compositionally biased toward low complexity. A compositionally biased stretch (polar residues) spans 1211-1224 (SQPTGPRSQGSFEY). Position 1221 is a phosphoserine (serine 1221). Low complexity predominate over residues 1318–1328 (SFPTSTSSDSS). O-linked (GlcNAc) threonine glycosylation is present at threonine 1339. Positions 1342-1351 (FAKEPQEPLK) are enriched in basic and acidic residues. Low complexity-rich tracts occupy residues 1352-1364 (LHSSPASPSLASK) and 1374-1386 (PGTPATTAMAPCP). Threonine 1380 is a glycosylation site (O-linked (GlcNAc) threonine). Residues 1402–1426 (SPSTSSTIHSYGQPPTTANYGSQTE) are compositionally biased toward polar residues. Serine 1470, serine 1479, and serine 1481 each carry phosphoserine. The span at 1476-1487 (STPSESPTFSPS) shows a compositional bias: low complexity. Composition is skewed to polar residues over residues 1496 to 1510 (EFSTQTPSLTPSSDI) and 1561 to 1597 (RMVHASASTSPLCSPTDSQPASHSYSQTTPPSASQMP). Omega-N-methylarginine is present on residues arginine 1780 and arginine 1784. Position 1794 is an asymmetric dimethylarginine; alternate (arginine 1794). The residue at position 1794 (arginine 1794) is an Omega-N-methylarginine; alternate. Position 1806 is an omega-N-methylarginine (arginine 1806). A disordered region spans residues 1914–1964 (PSAPDKSVTDAALPGQSSGPFYSPRDPEPPEPLTFRAQGVVGPGPHEEQRP). An O-linked (GlcNAc) threonine glycan is attached at threonine 1922. Phosphoserine occurs at positions 1978 and 2034. Arginine 2039 and arginine 2069 each carry omega-N-methylarginine. Asymmetric dimethylarginine occurs at positions 2243, 2253, and 2259. The disordered stretch occupies residues 2280 to 2305 (AAKASGAGGPPRPELPAGGAREEPLS). Residue threonine 2307 is glycosylated (O-linked (GlcNAc) threonine). 2 disordered regions span residues 2318 to 2343 (VAQAPAPPPGQKPAGDAAAGSGSGVL) and 2461 to 2486 (EEQKQRQKAPFPATCEAPSRGPPPAA). Positions 2345–2470 (RPVMEKEEAS…EEQKQRQKAP (126 aa)) form a coiled coil. An O-linked (GlcNAc) threonine glycan is attached at threonine 2510. Positions 2513–2648 (PGQAREPVLH…HEASASSSAA (136 aa)) are disordered. Polar residues predominate over residues 2527 to 2537 (SSASDMSLQTE). A Phosphoserine modification is found at serine 2564. Threonine 2581 and threonine 2608 each carry phosphothreonine. Positions 2629–2641 (RHSDSGSDSKHEA) are enriched in basic and acidic residues. O-linked (GlcNAc) threonine glycosylation is present at threonine 2685. Positions 2715 to 3263 (EPDGQAQGVA…GGVSGRPGKD (549 aa)) are interaction with DAO. Phosphoserine is present on residues serine 2796, serine 2845, and serine 2851. The disordered stretch occupies residues 2839 to 2859 (TLQRSLSDPKPLSPTAEESAK). An O-linked (GlcNAc) threonine glycan is attached at threonine 2930. Residues 2933 to 2975 (SLLRELDRDLRLVEHESTKLRKKQAELDEEEKEIDAKLKYLEL) adopt a coiled-coil conformation. Residues 2934-2996 (LLRELDRDLR…DRVGRDYPPL (63 aa)) are sufficient for binding to ERC2. Position 3007 is a phosphoserine (serine 3007). Positions 3055–3068 (TQYTAGSSGPTQNG) are enriched in polar residues. 4 disordered regions span residues 3055–3148 (TQYT…ADLE), 3162–3399 (AVTV…SRKF), 3414–3546 (QQRY…PRAH), and 3569–3910 (YHLG…VFSK). Over residues 3184–3196 (EHGKAPEHPRGGD) the composition is skewed to basic and acidic residues. Positions 3198-3222 (SSVSQSPAPTYPSDSHYTSLEQNVP) are enriched in polar residues. Serine 3286 is subject to Phosphoserine. The span at 3304 to 3315 (ESNGRPASTHYY) shows a compositional bias: polar residues. Basic and acidic residues-rich tracts occupy residues 3316–3328 (SDSDYRHGARADK), 3358–3377 (QGMEQKISKFSPIEEAKDVE), and 3450–3469 (LSSHDFSSRSKGYERERETA). Serine 3368 is modified (phosphoserine). Arginine 3488 carries the post-translational modification Omega-N-methylarginine. Residues 3506–3520 (PLGRPRPAGGALPPG) are compositionally biased toward low complexity. Composition is skewed to basic and acidic residues over residues 3535–3546 (VQEHVKDGPRAH) and 3578–3588 (WFDKPRDARSD). Basic residues predominate over residues 3638–3651 (EHRHHGDHGRHSGR). Residues 3652–3676 (HAGEEPGRRAARPHARDMGRHETRP) show a composition bias toward basic and acidic residues. Residues 3751–3820 (PQQSQPPSSR…ARLQQQSQPT (70 aa)) are compositionally biased toward low complexity. Residues 3772–3803 (QTQQQQQQQQQQQQQQQQQQQQQQQQGLGQQA) adopt a coiled-coil conformation. Omega-N-methylarginine is present on arginine 3822. Over residues 3834–3848 (KPQPGPTTAPGPQPA) the composition is skewed to pro residues. 2 stretches are compositionally biased toward low complexity: residues 3860–3887 (KPAAKAPQQGRAPQAQSAPGPAGAKTGA) and 3894–3904 (GAPAGQPAAEG).

As to quaternary structure, interacts with PCLO, ERC2/CAST1, RIMS1 and UNC13A. Interacts with TPRG1L. Interacts with DYNLL1 and DYNLL2; these interactions potentially link PTVs to dynein and myosin V motor complexes. Interacts with ATG5; this interaction is important for the regulation of presynaptic autophagy. Interacts (via C-terminus) with TRIO (via N-terminus). Interacts with CTBP1. Interacts with SIAH1; this interaction negatively regulates SIAH1 E3 ligase activity. Interacts (via coiled region) with DAO; the interaction is direct. Myristoylated. The N-terminal myristoylation is not sufficient for presynaptic localization. In terms of tissue distribution, detected at synapses in the stratum lucidum in the hippocampus CA3 region (at protein level).

The protein localises to the cytoplasm. It localises to the presynaptic active zone. It is found in the cytoskeleton. The protein resides in the cytoplasmic vesicle. Its subcellular location is the secretory vesicle. The protein localises to the synaptic vesicle membrane. Its function is as follows. Scaffold protein of the presynaptic cytomatrix at the active zone (CAZ) which is the place in the synapse where neurotransmitter is released. After synthesis, participates in the formation of Golgi-derived membranous organelles termed Piccolo-Bassoon transport vesicles (PTVs) that are transported along axons to sites of nascent synaptic contacts. At the presynaptic active zone, regulates the spatial organization of synaptic vesicle cluster, the protein complexes that execute membrane fusion and compensatory endocytosis. Also functions in processes other than assembly such as the regulation of specific presynaptic protein ubiquitination by interacting with SIAH1 or the regulation of presynaptic autophagy by associating with ATG5. Also mediates synapse to nucleus communication leading to reconfiguration of gene expression by associating with the transcriptional corepressor CTBP1 and by subsequently reducing the size of its pool available for nuclear import. Inhibits the activity of the proportion of DAO enzyme that localizes to the presynaptic active zone, which may modulate synaptic transmission. This Rattus norvegicus (Rat) protein is Protein bassoon.